The sequence spans 98 residues: Large ribosomal subunit protein bL28 (98 aa).

Belongs to the bacterial ribosomal protein bL28 family.

The polypeptide is Large ribosomal subunit protein bL28 (Mesorhizobium japonicum (strain LMG 29417 / CECT 9101 / MAFF 303099) (Mesorhizobium loti (strain MAFF 303099))).